Reading from the N-terminus, the 315-residue chain is Calumenin (315 aa).

The signal sequence occupies residues 1–19 (MDLRQFLLCLSLCTAFALS). The residue at position 47 (Tyr-47) is a Phosphotyrosine. The residue at position 65 (Thr-65) is a Phosphothreonine. EF-hand domains follow at residues 68–103 (ESKE…AQKR), 104–139 (WIHE…YVLD), 151–186 (QMMV…DEYD), 188–223 (MKDI…HDGN), 229–264 (WVKT…SDYD), and 265–300 (HAEA…FVGS). Ser-69 carries the phosphoserine modification. Asp-81, Asp-83, Asp-85, Glu-92, Asp-117, Asn-119, Asp-121, and Glu-128 together coordinate Ca(2+). Asn-131 is a glycosylation site (N-linked (GlcNAc...) asparagine). Position 164 (Asp-164) interacts with Ca(2+). N6-acetyllysine is present on Lys-165. Residues Asp-166, Asp-168, Glu-175, Asp-201, Asn-203, Asp-205, Glu-212, Asp-242, Asn-244, Asp-246, Arg-248, and Glu-253 each coordinate Ca(2+). A Phosphothreonine modification is found at Thr-254. 2 positions are modified to phosphoserine: Ser-261 and Ser-277. Residues Asp-278, Asn-280, Asp-282, Lys-284, and Glu-289 each coordinate Ca(2+). The short motif at 312–315 (HDEF) is the Prevents secretion from ER element.

This sequence belongs to the CREC family. As to quaternary structure, interacts with GGCX.

The protein resides in the endoplasmic reticulum membrane. The protein localises to the golgi apparatus. Its subcellular location is the secreted. It is found in the melanosome. It localises to the sarcoplasmic reticulum lumen. Involved in regulation of vitamin K-dependent carboxylation of multiple N-terminal glutamate residues. Seems to inhibit gamma-carboxylase GGCX. Binds 7 calcium ions with a low affinity. The chain is Calumenin (CALU) from Mesocricetus auratus (Golden hamster).